The primary structure comprises 569 residues: Sulfite reductase [NADPH] hemoprotein beta-component (569 aa).

[4Fe-4S] cluster is bound by residues cysteine 434, cysteine 440, cysteine 479, and cysteine 483. Position 483 (cysteine 483) interacts with siroheme.

It belongs to the nitrite and sulfite reductase 4Fe-4S domain family. Alpha(8)-beta(8). The alpha component is a flavoprotein, the beta component is a hemoprotein. Requires siroheme as cofactor. It depends on [4Fe-4S] cluster as a cofactor.

The enzyme catalyses hydrogen sulfide + 3 NADP(+) + 3 H2O = sulfite + 3 NADPH + 4 H(+). The protein operates within sulfur metabolism; hydrogen sulfide biosynthesis; hydrogen sulfide from sulfite (NADPH route): step 1/1. Functionally, component of the sulfite reductase complex that catalyzes the 6-electron reduction of sulfite to sulfide. This is one of several activities required for the biosynthesis of L-cysteine from sulfate. The chain is Sulfite reductase [NADPH] hemoprotein beta-component from Staphylococcus carnosus (strain TM300).